Consider the following 372-residue polypeptide: GDSL esterase/lipase At1g54020 (372 aa).

The N-terminal stretch at 1–26 (MECSSVSVLGILLVFPLLHNLVTISG) is a signal peptide. Ser-40 serves as the catalytic Nucleophile. N-linked (GlcNAc...) asparagine glycans are attached at residues Asn-161 and Asn-280. Residues Asp-314 and His-317 contribute to the active site.

It belongs to the 'GDSL' lipolytic enzyme family.

It is found in the secreted. The protein is GDSL esterase/lipase At1g54020 of Arabidopsis thaliana (Mouse-ear cress).